Here is a 302-residue protein sequence, read N- to C-terminus: tRNA pseudouridine synthase B (302 aa).

Asp40 (nucleophile) is an active-site residue.

It belongs to the pseudouridine synthase TruB family. Type 1 subfamily.

The catalysed reaction is uridine(55) in tRNA = pseudouridine(55) in tRNA. Its function is as follows. Responsible for synthesis of pseudouridine from uracil-55 in the psi GC loop of transfer RNAs. This chain is tRNA pseudouridine synthase B, found in Shouchella clausii (strain KSM-K16) (Alkalihalobacillus clausii).